A 124-amino-acid polypeptide reads, in one-letter code: MATINQLVRKPRAKQVVKSNVPALAACPQKRGVCTRVYTTTPRKPNSALRKVCRVRLTNGFEVTSYIGGEGHNLQEHSVVLIRGGRVKDLPGVRYHTVRGALDCAGVNDRKQARSKYGVKRPKS.

Residue Asp-89 is modified to 3-methylthioaspartic acid.

The protein belongs to the universal ribosomal protein uS12 family. Part of the 30S ribosomal subunit. Contacts proteins S8 and S17. May interact with IF1 in the 30S initiation complex.

With S4 and S5 plays an important role in translational accuracy. Its function is as follows. Interacts with and stabilizes bases of the 16S rRNA that are involved in tRNA selection in the A site and with the mRNA backbone. Located at the interface of the 30S and 50S subunits, it traverses the body of the 30S subunit contacting proteins on the other side and probably holding the rRNA structure together. The combined cluster of proteins S8, S12 and S17 appears to hold together the shoulder and platform of the 30S subunit. The polypeptide is Small ribosomal subunit protein uS12 (Vibrio cholerae serotype O1 (strain ATCC 39541 / Classical Ogawa 395 / O395)).